The chain runs to 200 residues: Imidazole glycerol phosphate synthase subunit HisH (200 aa).

In terms of domain architecture, Glutamine amidotransferase type-1 spans 3–200; it reads DVALIDAGGA…LRNFLEMSFP (198 aa). Residue Cys-78 is the Nucleophile of the active site. Catalysis depends on residues His-179 and Glu-181.

As to quaternary structure, heterodimer of HisH and HisF.

The protein resides in the cytoplasm. The enzyme catalyses 5-[(5-phospho-1-deoxy-D-ribulos-1-ylimino)methylamino]-1-(5-phospho-beta-D-ribosyl)imidazole-4-carboxamide + L-glutamine = D-erythro-1-(imidazol-4-yl)glycerol 3-phosphate + 5-amino-1-(5-phospho-beta-D-ribosyl)imidazole-4-carboxamide + L-glutamate + H(+). It catalyses the reaction L-glutamine + H2O = L-glutamate + NH4(+). The protein operates within amino-acid biosynthesis; L-histidine biosynthesis; L-histidine from 5-phospho-alpha-D-ribose 1-diphosphate: step 5/9. Its function is as follows. IGPS catalyzes the conversion of PRFAR and glutamine to IGP, AICAR and glutamate. The HisH subunit catalyzes the hydrolysis of glutamine to glutamate and ammonia as part of the synthesis of IGP and AICAR. The resulting ammonia molecule is channeled to the active site of HisF. The protein is Imidazole glycerol phosphate synthase subunit HisH of Xanthomonas euvesicatoria pv. vesicatoria (strain 85-10) (Xanthomonas campestris pv. vesicatoria).